The sequence spans 1441 residues: Envelopment polyprotein (1441 aa).

An N-terminal signal peptide occupies residues 1 to 13 (MICILVLITVAAA). The Lumenal segment spans residues 14 to 200 (SPVYQRCFQD…GSIANSICQN (187 aa)). N-linked (GlcNAc...) asparagine; by host glycosylation is present at Asn57. Over 201–221 (IEIIILVTLTLLIFILLSILS) the chain traverses the membrane. Over 222–305 (KTYICYLLMP…RAARVMCKSK (84 aa)) the chain is Cytoplasmic. Positions 306–326 (GPASILSIITAVLVLTFVTPI) form a transmembrane segment. Residues 327–361 (NSMVLGESKETFELEDLPDDMLEMASRINSYYLTC) are Lumenal-facing. The chain crosses the lipid bilayer at residues 362–382 (ILNYAVSWGLVIIGLLIGLLF). At 383–450 (KKYQHRFLNV…NCLVQYKAKW (68 aa)) the chain is on the cytoplasmic side. The chain crosses the lipid bilayer at residues 451–471 (MMNFLIIYIFLILIKDSAIVV). The Lumenal segment spans residues 472-1395 (QAAGTDFTTC…EPFKNLFGSY (924 aa)). N-linked (GlcNAc...) asparagine; by host glycosylation occurs at Asn490. Residues 1066 to 1087 (WGCEEFGCLAVSDGCVFGSCQD) form a fusion peptide region. Asn1177 is a glycosylation site (N-linked (GlcNAc...) asparagine; by host). Positions 1396-1416 (IGIFYTFIISIVVLLVIIYVL) form a transmembrane segment. The Cytoplasmic portion of the chain corresponds to 1417 to 1433 (LPICFKLRDTLRKHEDA).

The protein belongs to the orthobunyaviruses M polyprotein family. As to quaternary structure, glycoprotein C and Glycoprotein N interact with each other.

It localises to the virion membrane. It is found in the host Golgi apparatus membrane. The protein localises to the host endoplasmic reticulum membrane. In terms of biological role, glycoprotein C and glycoprotein N interact with each other and are present at the surface of the virion. They are able to attach the virion to a cell receptor and to promote fusion of membranes after endocytosis of the virion. The protein is Envelopment polyprotein (GP) of Bunyavirus La Crosse (isolate Human/United States/L78/1978).